The following is a 174-amino-acid chain: B3 domain-containing protein At3g06220 (174 aa).

A DNA-binding region (TF-B3) is located at residues 8-101 (PRFYTVFLSC…SYEVSIYGRG (94 aa)). Residues 114-174 (EISDESESDN…ISDASDSDYY (61 aa)) are disordered. Acidic residues-rich tracts occupy residues 139 to 150 (ENSDDTEGDNDS) and 164 to 174 (EISDASDSDYY).

The protein resides in the nucleus. This is B3 domain-containing protein At3g06220 from Arabidopsis thaliana (Mouse-ear cress).